Consider the following 2629-residue polypeptide: Protein DOP1 homolog (2629 aa).

Disordered stretches follow at residues 561 to 584 (NKGVPGTHTQGSSLEKSKSDSRLN), 605 to 652 (SASN…TPRS), 688 to 710 (AGNVHDAEEPKSAPPDPQSPQFY), 1278 to 1340 (MDES…SSSA), 1371 to 1395 (TYRLTREKTPGENSLNSVATDQTEH), 1435 to 1471 (ISKTSTDSNLSNSCSQAEPAPEGDPQGEEEATAATDS), and 1766 to 1785 (RQDTPPAAGDDSTGNTSPTR). 2 stretches are compositionally biased toward polar residues: residues 605 to 615 (SASNQSVGRQS) and 636 to 647 (ASDTGQQSSSDL). Acidic residues predominate over residues 1307-1320 (DITDNSDSSDFESD). Positions 1321–1333 (SELRETSLEKEDS) are enriched in basic and acidic residues. Polar residues-rich tracts occupy residues 1381-1391 (GENSLNSVATD) and 1435-1450 (ISKTSTDSNLSNSCSQ).

Belongs to the DOP1 family.

Its subcellular location is the golgi apparatus membrane. May be involved in protein traffic between late Golgi and early endosomes. The chain is Protein DOP1 homolog from Drosophila pseudoobscura pseudoobscura (Fruit fly).